Consider the following 117-residue polypeptide: DNA-directed RNA polymerase subunit omega (117 aa).

Belongs to the RNA polymerase subunit omega family. As to quaternary structure, the RNAP catalytic core consists of 2 alpha, 1 beta, 1 beta' and 1 omega subunit. When a sigma factor is associated with the core the holoenzyme is formed, which can initiate transcription.

It carries out the reaction RNA(n) + a ribonucleoside 5'-triphosphate = RNA(n+1) + diphosphate. Its function is as follows. Promotes RNA polymerase assembly. Latches the N- and C-terminal regions of the beta' subunit thereby facilitating its interaction with the beta and alpha subunits. The polypeptide is DNA-directed RNA polymerase subunit omega (Cereibacter sphaeroides (strain ATCC 17025 / ATH 2.4.3) (Rhodobacter sphaeroides)).